The chain runs to 197 residues: Xanthine phosphoribosyltransferase (197 aa).

Xanthine-binding residues include Leu20 and Thr27. 128-132 (ANGQA) contributes to the 5-phospho-alpha-D-ribose 1-diphosphate binding site. Lys156 contacts xanthine.

This sequence belongs to the purine/pyrimidine phosphoribosyltransferase family. Xpt subfamily. As to quaternary structure, homodimer.

The protein localises to the cytoplasm. It catalyses the reaction XMP + diphosphate = xanthine + 5-phospho-alpha-D-ribose 1-diphosphate. The protein operates within purine metabolism; XMP biosynthesis via salvage pathway; XMP from xanthine: step 1/1. Converts the preformed base xanthine, a product of nucleic acid breakdown, to xanthosine 5'-monophosphate (XMP), so it can be reused for RNA or DNA synthesis. The chain is Xanthine phosphoribosyltransferase from Lactococcus lactis subsp. cremoris (strain SK11).